A 74-amino-acid polypeptide reads, in one-letter code: Large ribosomal subunit protein bL31 (74 aa).

It belongs to the bacterial ribosomal protein bL31 family. Type A subfamily. In terms of assembly, part of the 50S ribosomal subunit.

Functionally, binds the 23S rRNA. The protein is Large ribosomal subunit protein bL31 of Phenylobacterium zucineum (strain HLK1).